A 381-amino-acid polypeptide reads, in one-letter code: Mannitol-1-phosphate 5-dehydrogenase (381 aa).

3–14 (TLHFGAGNIGRG) contributes to the NAD(+) binding site.

It belongs to the mannitol dehydrogenase family.

It carries out the reaction D-mannitol 1-phosphate + NAD(+) = beta-D-fructose 6-phosphate + NADH + H(+). This is Mannitol-1-phosphate 5-dehydrogenase from Aeromonas salmonicida (strain A449).